A 2812-amino-acid polypeptide reads, in one-letter code: Polyunsaturated fatty acid synthase subunit A (2812 aa).

Positions 12-472 (DTRIAVIGMS…GANYHAVLEE (461 aa)) constitute a Ketosynthase family 3 (KS3) domain. Residues cysteine 213, histidine 348, and histidine 390 each act as for beta-ketoacyl synthase activity in the active site. The region spanning 602–913 (LFSGQGAQYT…TVSVNPASGK (312 aa)) is the Malonyl-CoA:ACP transacylase (MAT) domain. Residues 1000 to 1048 (DEEAKREAARLQKQLEDAQRQLDEAKRAADEANQKLAAAKEEAKSAAAS) are a coiled coil. Carrier domains lie at 1114–1193 (ALLA…KAEI), 1232–1308 (ERAE…KAEI), and 1342–1418 (AKAE…KAEI). An O-(pantetheine 4'-phosphoryl)serine mark is found at serine 1152, serine 1267, and serine 1377. A disordered region spans residues 1422–1442 (SAPAPAAAAPAPAAPAPAAAA). Positions 1423 to 1442 (APAPAAAAPAPAAPAPAAAA) are enriched in low complexity. Residues 1455-1531 (AKAETVVMEV…EVVDAMKAEI (77 aa)) enclose the Carrier 4 domain. Serine 1490 carries the post-translational modification O-(pantetheine 4'-phosphoryl)serine. Residues 1535-1555 (SAPAPAAAAPAPAAPAPAAAA) are disordered. Low complexity predominate over residues 1536-1555 (APAPAAAAPAPAAPAPAAAA). Carrier domains are found at residues 1568–1644 (AKAE…KAEI), 1681–1757 (AKAE…KAEI), 1792–1868 (AKAE…KAEI), and 1903–1979 (AKAE…KAEI). O-(pantetheine 4'-phosphoryl)serine is present on residues serine 1603, serine 1716, serine 1827, and serine 1938. One can recognise a Ketoreductase (KR) domain in the interval 2257–2484 (VVSGGARGIT…VKSICFGPWD (228 aa)). The tract at residues 2524-2651 (EILVGNWRTP…RAVVVLSSQG (128 aa)) is N-terminal hotdog fold. A PKS/mFAS DH domain is found at 2524 to 2812 (EILVGNWRTP…SVIATDSLAF (289 aa)). Positions 2540–2800 (ETITLHRKIS…NEQGDLFIDV (261 aa)) are dehydratase (DH) domain. Histidine 2559 acts as the Proton acceptor; for dehydratase activity in catalysis. The interval 2666–2812 (ADPAAQSAVY…SVIATDSLAF (147 aa)) is C-terminal hotdog fold. Aspartate 2730 (proton donor; for dehydratase activity) is an active-site residue.

Component of the polyunsaturated fatty acid synthase complex composed of at least ORF-A, ORF-B and ORF-C. Pantetheine 4'-phosphate is required as a cofactor.

It functions in the pathway lipid metabolism; fatty acid biosynthesis. Functionally, poliketide synthase-like protein; part of the polyunsaturated fatty acid synthase composed of the 3 PKS-like subunits A, B and C. While the saturated fatty acids (SFAs) in Thraustochytrium are produced by the conventional fatty acid synthase (FAS) pathway, polyunsaturated fatty acids (PUFAs) including docosahexeanoic acid (DHA) and docosapentaenoic acid (DPA) are synthesized via an anaerobical PKS pathway. PUFA synthase assimilates fatty acyl-CoA, the product of FAS, as the starter unit to synthesize DPA, and this starter unit may be butyryl-CoA, hexanoyl-CoA, or octanoyl-CoA. DPA and DHA biosynthesis seem to differ by the reduction at the N-3 position by PUFA synthase, not the extension of carbon chain. In DHA biosynthesis, PUFA synthase extends the fatty acyl chain from the methyl toward the carboxyl end, and the double bond is formed when the carbon chain is growing, instead of afterward. Therefore, PUFA synthase is unable to transform DPA to DHA, suggesting that DPA is not the precursor of DHA. Moreover, DPA molecule is partly extended by FAS KS domain, so DPA biosynthesis is less dependent on PUFA synthase KS domain than DHA. The sequence is that of Polyunsaturated fatty acid synthase subunit A from Thraustochytrium sp. (strain ATCC 26185 / S-3).